Here is a 97-residue protein sequence, read N- to C-terminus: uncharacterized protein (97 aa).

This is an uncharacterized protein from Sulfolobus islandicus filamentous virus (isolate Iceland/Hveragerdi) (SIFV).